Reading from the N-terminus, the 148-residue chain is uncharacterized protein (148 aa).

Residues 3 to 64 (LDALDRKILE…KLNYESIGYD (62 aa)) enclose the HTH asnC-type domain. The segment at residues 22-41 (YREIAKDLNVAVGTIYNRIK) is a DNA-binding region (H-T-H motif).

This is an uncharacterized protein from Pyrococcus horikoshii (strain ATCC 700860 / DSM 12428 / JCM 9974 / NBRC 100139 / OT-3).